A 108-amino-acid polypeptide reads, in one-letter code: PTS system galactose-specific EIIB component (108 aa).

The region spanning 3 to 108 (DKVIALACAA…VLAAAENLMN (106 aa)) is the PTS EIIB type-3 domain. Cysteine 10 acts as the Phosphocysteine intermediate in catalysis. Cysteine 10 is modified (phosphocysteine; by EIIA).

It carries out the reaction N(pros)-phospho-L-histidyl-[protein] + D-galactose(out) = D-galactose 6-phosphate(in) + L-histidyl-[protein]. The phosphoenolpyruvate-dependent sugar phosphotransferase system (sugar PTS), a major carbohydrate active transport system, catalyzes the phosphorylation of incoming sugar substrates concomitantly with their translocation across the cell membrane. Involved in galactose transport with PtcA and Lmg_0963. The chain is PTS system galactose-specific EIIB component from Lactococcus lactis subsp. cremoris (strain MG1363).